The chain runs to 311 residues: Malate dehydrogenase (311 aa).

NAD(+)-binding positions include 7–13 (GAAGGIG) and Asp-34. Positions 81 and 87 each coordinate substrate. Residues Asn-94 and 117–119 (ITN) each bind NAD(+). Residues Asn-119 and Arg-153 each coordinate substrate. Residue His-177 is the Proton acceptor of the active site. Position 227 (Met-227) interacts with NAD(+).

This sequence belongs to the LDH/MDH superfamily. MDH type 1 family. Homodimer.

It carries out the reaction (S)-malate + NAD(+) = oxaloacetate + NADH + H(+). Catalyzes the reversible oxidation of malate to oxaloacetate. The chain is Malate dehydrogenase from Shewanella sp. (strain MR-4).